Consider the following 656-residue polypeptide: Membrane-associated tyrosine- and threonine-specific cdc2-inhibitory kinase wee-1.3 (656 aa).

The segment covering 1–11 has biased composition (polar residues); sequence MDETENNTSID. Residues 1–24 are disordered; sequence MDETENNTSIDSVEVGPSSPRVVA. The Protein kinase domain occupies 107 to 354; that stretch reads FQIDEIIGRG…SDALRKHLSI (248 aa). ATP contacts are provided by residues 113–121 and Lys136; that span reads IGRGSFGEV. Asp227 functions as the Proton acceptor in the catalytic mechanism. Mg(2+) contacts are provided by Asn232 and Asp245. Disordered regions lie at residues 449–552 and 617–656; these read PFDF…NSSI and KGKE…GDEN. The segment covering 486-505 has biased composition (polar residues); sequence ATCSSSNSSAIETAEDSLSS. Positions 617–631 are enriched in basic and acidic residues; the sequence is KGKEKPVVEPAELRQ. A compositionally biased stretch (polar residues) spans 646–656; it reads ASFQGSSGDEN.

This sequence belongs to the protein kinase superfamily. Ser/Thr protein kinase family. WEE1 subfamily.

It is found in the golgi apparatus membrane. Its subcellular location is the cytoplasm. The catalysed reaction is L-seryl-[protein] + ATP = O-phospho-L-seryl-[protein] + ADP + H(+). It carries out the reaction L-threonyl-[protein] + ATP = O-phospho-L-threonyl-[protein] + ADP + H(+). In terms of biological role, acts as a negative regulator of entry into mitosis (G2 to M transition) by phosphorylation of the CDK1 kinase during oocyte maturation. Required for embryonic development, germline proliferation and initiation of meiosis during spermatogenesis. Required for chromosome structure during mitosis and negative regulation of nuclear envelope breakdown. The chain is Membrane-associated tyrosine- and threonine-specific cdc2-inhibitory kinase wee-1.3 from Caenorhabditis briggsae.